The following is a 456-amino-acid chain: Bifunctional protein GlmU (456 aa).

A pyrophosphorylase region spans residues 1 to 229 (MLNNAMSVVI…LSEVEGVNNR (229 aa)). UDP-N-acetyl-alpha-D-glucosamine-binding positions include 11 to 14 (LAAG), K25, Q76, 81 to 82 (GT), 103 to 105 (YGD), G140, E154, N169, and N227. A Mg(2+)-binding site is contributed by D105. N227 is a binding site for Mg(2+). The tract at residues 230-250 (LQLSRLERVYQSEQAEKLLLA) is linker. The tract at residues 251-456 (GVMLRDPARF…EGWRRPVKKK (206 aa)) is N-acetyltransferase. Positions 333 and 351 each coordinate UDP-N-acetyl-alpha-D-glucosamine. H363 acts as the Proton acceptor in catalysis. UDP-N-acetyl-alpha-D-glucosamine contacts are provided by Y366 and N377. Acetyl-CoA contacts are provided by residues A380, 386-387 (NY), S405, A423, and R440.

It in the N-terminal section; belongs to the N-acetylglucosamine-1-phosphate uridyltransferase family. The protein in the C-terminal section; belongs to the transferase hexapeptide repeat family. Homotrimer. Requires Mg(2+) as cofactor.

It is found in the cytoplasm. It catalyses the reaction alpha-D-glucosamine 1-phosphate + acetyl-CoA = N-acetyl-alpha-D-glucosamine 1-phosphate + CoA + H(+). It carries out the reaction N-acetyl-alpha-D-glucosamine 1-phosphate + UTP + H(+) = UDP-N-acetyl-alpha-D-glucosamine + diphosphate. It functions in the pathway nucleotide-sugar biosynthesis; UDP-N-acetyl-alpha-D-glucosamine biosynthesis; N-acetyl-alpha-D-glucosamine 1-phosphate from alpha-D-glucosamine 6-phosphate (route II): step 2/2. Its pathway is nucleotide-sugar biosynthesis; UDP-N-acetyl-alpha-D-glucosamine biosynthesis; UDP-N-acetyl-alpha-D-glucosamine from N-acetyl-alpha-D-glucosamine 1-phosphate: step 1/1. It participates in bacterial outer membrane biogenesis; LPS lipid A biosynthesis. Its function is as follows. Catalyzes the last two sequential reactions in the de novo biosynthetic pathway for UDP-N-acetylglucosamine (UDP-GlcNAc). The C-terminal domain catalyzes the transfer of acetyl group from acetyl coenzyme A to glucosamine-1-phosphate (GlcN-1-P) to produce N-acetylglucosamine-1-phosphate (GlcNAc-1-P), which is converted into UDP-GlcNAc by the transfer of uridine 5-monophosphate (from uridine 5-triphosphate), a reaction catalyzed by the N-terminal domain. The protein is Bifunctional protein GlmU of Shigella sonnei (strain Ss046).